Consider the following 367-residue polypeptide: Histidinol-phosphate aminotransferase (367 aa).

At Lys221 the chain carries N6-(pyridoxal phosphate)lysine.

This sequence belongs to the class-II pyridoxal-phosphate-dependent aminotransferase family. Histidinol-phosphate aminotransferase subfamily. Homodimer. Pyridoxal 5'-phosphate is required as a cofactor.

The catalysed reaction is L-histidinol phosphate + 2-oxoglutarate = 3-(imidazol-4-yl)-2-oxopropyl phosphate + L-glutamate. The protein operates within amino-acid biosynthesis; L-histidine biosynthesis; L-histidine from 5-phospho-alpha-D-ribose 1-diphosphate: step 7/9. The protein is Histidinol-phosphate aminotransferase of Paracoccus denitrificans (strain Pd 1222).